Here is a 56-residue protein sequence, read N- to C-terminus: MAKKSGDVRPKITLACTECKERNYITKKNRRNNPDRMEMAKFCPRCRKHTAHRETR.

The protein belongs to the bacterial ribosomal protein bL33 family.

The polypeptide is Large ribosomal subunit protein bL33A (Cutibacterium acnes (strain DSM 16379 / KPA171202) (Propionibacterium acnes)).